Consider the following 172-residue polypeptide: Small ribosomal subunit protein uS5 (172 aa).

The region spanning 15–78 is the S5 DRBM domain; it reads LNDKLIFINR…ANAKRNLSRI (64 aa).

This sequence belongs to the universal ribosomal protein uS5 family. In terms of assembly, part of the 30S ribosomal subunit. Contacts proteins S4 and S8.

With S4 and S12 plays an important role in translational accuracy. Functionally, located at the back of the 30S subunit body where it stabilizes the conformation of the head with respect to the body. The polypeptide is Small ribosomal subunit protein uS5 (Dehalococcoides mccartyi (strain CBDB1)).